The following is a 446-amino-acid chain: Adenylosuccinate synthetase (446 aa).

Residues 20–26 (GDEGKGK) and 48–50 (GHT) contribute to the GTP site. D21 serves as the catalytic Proton acceptor. 2 residues coordinate Mg(2+): D21 and G48. Residues 21-24 (DEGK), 46-49 (NAGH), T137, R151, Q232, T247, and R319 contribute to the IMP site. The active-site Proton donor is the H49. 315–321 (SVTGRPR) provides a ligand contact to substrate. GTP-binding positions include R321, 347–349 (KLD), and 429–431 (STG).

Belongs to the adenylosuccinate synthetase family. Homodimer. Requires Mg(2+) as cofactor.

The protein resides in the cytoplasm. The enzyme catalyses IMP + L-aspartate + GTP = N(6)-(1,2-dicarboxyethyl)-AMP + GDP + phosphate + 2 H(+). Its pathway is purine metabolism; AMP biosynthesis via de novo pathway; AMP from IMP: step 1/2. Functionally, plays an important role in the de novo pathway of purine nucleotide biosynthesis. Catalyzes the first committed step in the biosynthesis of AMP from IMP. The sequence is that of Adenylosuccinate synthetase from Ralstonia pickettii (strain 12J).